The primary structure comprises 318 residues: Pyrimidine-specific ribonucleoside hydrolase RihA (318 aa).

Residue His-240 is part of the active site.

Belongs to the IUNH family. RihA subfamily.

In terms of biological role, hydrolyzes cytidine or uridine to ribose and cytosine or uracil, respectively. The chain is Pyrimidine-specific ribonucleoside hydrolase RihA from Shewanella baltica (strain OS155 / ATCC BAA-1091).